We begin with the raw amino-acid sequence, 179 residues long: Transcription factor NF-E4 (179 aa).

Lys43 carries the post-translational modification N6-acetyllysine. A disordered region spans residues 100-179 (AMKATGPHNA…QLPSLHLSQG (80 aa)). Composition is skewed to polar residues over residues 143–153 (LSQSNPPTRIS) and 163–179 (ALEQTPQQLPSLHLSQG).

Component of the SSP (stage selector protein) complex, which appears to be a heteromer of TFCP2 and 2 copies of NFE4. Interacts with HDAC1 and PCAF. Isoform 2 interacts with TFCP2. In terms of processing, acetylation at Lys-43 prolongs the protein half-life by preventing ubiquitin-mediated degradation and reduces the interaction between NF-E4 and HDAC1, potentially maximizing the activating ability of the factor at the gamma-promoter. Post-translationally, ubiquitinated; leading to its degradation by the proteasome. Acetylation at Lys-43 prevents ubiquitination. In terms of tissue distribution, specifically expressed in fetal liver, cord blood and bone marrow. Also expressed in the K562 and HEL cell lines, which constitutively express the fetal globin genes.

It is found in the nucleus. Functions as part of the SSP (stage selector protein) complex, a complex that contributes to the preferential expression of the gamma-gene in fetal erythroid cells by facilitating the interaction of the gamma-globin genes with enhancer elements contained in the locus control region (LCR). The complex binds to the stage selector element (SSE) in the proximal gamma-globin promoter. In contrast, isoform 2 acts as a repressor of gamma-globin gene expression by preventing NFE2 and RNA polymerase II recruitment to the promoter. The chain is Transcription factor NF-E4 (NFE4) from Homo sapiens (Human).